Here is a 75-residue protein sequence, read N- to C-terminus: UPF0352 protein VV1166 (75 aa).

It belongs to the UPF0352 family.

This chain is UPF0352 protein VV1166, found in Vibrio vulnificus (strain YJ016).